The chain runs to 138 residues: Cysteine desulfuration protein SufE (138 aa).

Cys-51 functions as the Cysteine persulfide intermediate in the catalytic mechanism.

Belongs to the SufE family. In terms of assembly, homodimer. Interacts with SufS.

It localises to the cytoplasm. It functions in the pathway cofactor biosynthesis; iron-sulfur cluster biosynthesis. In terms of biological role, participates in cysteine desulfuration mediated by SufS. Cysteine desulfuration mobilizes sulfur from L-cysteine to yield L-alanine and constitutes an essential step in sulfur metabolism for biosynthesis of a variety of sulfur-containing biomolecules. Functions as a sulfur acceptor for SufS, by mediating the direct transfer of the sulfur atom from the S-sulfanylcysteine of SufS, an intermediate product of cysteine desulfuration process. The sequence is that of Cysteine desulfuration protein SufE from Citrobacter koseri (strain ATCC BAA-895 / CDC 4225-83 / SGSC4696).